Here is a 417-residue protein sequence, read N- to C-terminus: Gamma-glutamyl phosphate reductase (417 aa).

It belongs to the gamma-glutamyl phosphate reductase family.

The protein localises to the cytoplasm. The catalysed reaction is L-glutamate 5-semialdehyde + phosphate + NADP(+) = L-glutamyl 5-phosphate + NADPH + H(+). It participates in amino-acid biosynthesis; L-proline biosynthesis; L-glutamate 5-semialdehyde from L-glutamate: step 2/2. In terms of biological role, catalyzes the NADPH-dependent reduction of L-glutamate 5-phosphate into L-glutamate 5-semialdehyde and phosphate. The product spontaneously undergoes cyclization to form 1-pyrroline-5-carboxylate. This Escherichia coli (strain SMS-3-5 / SECEC) protein is Gamma-glutamyl phosphate reductase.